A 337-amino-acid polypeptide reads, in one-letter code: tRNA-cytidine(32) 2-sulfurtransferase (337 aa).

Positions 71–76 (SGGKDS) match the PP-loop motif motif. Residues Cys-146, Cys-149, and Cys-237 each coordinate [4Fe-4S] cluster.

Belongs to the TtcA family. Homodimer. Requires Mg(2+) as cofactor. The cofactor is [4Fe-4S] cluster.

The protein resides in the cytoplasm. The enzyme catalyses cytidine(32) in tRNA + S-sulfanyl-L-cysteinyl-[cysteine desulfurase] + AH2 + ATP = 2-thiocytidine(32) in tRNA + L-cysteinyl-[cysteine desulfurase] + A + AMP + diphosphate + H(+). Its pathway is tRNA modification. Functionally, catalyzes the ATP-dependent 2-thiolation of cytidine in position 32 of tRNA, to form 2-thiocytidine (s(2)C32). The sulfur atoms are provided by the cysteine/cysteine desulfurase (IscS) system. The sequence is that of tRNA-cytidine(32) 2-sulfurtransferase from Burkholderia vietnamiensis (strain G4 / LMG 22486) (Burkholderia cepacia (strain R1808)).